The following is a 261-amino-acid chain: Intermembrane phospholipid transport system permease protein MlaE (261 aa).

At 1 to 12 the chain is on the cytoplasmic side; sequence MIVNFISALGKQ. A helical membrane pass occupies residues 13–33; sequence VIDFFRALGRAGFMLFGALIG. At 34–49 the chain is on the periplasmic side; the sequence is KPQIRKHFPLLVKQMH. The helical transmembrane segment at 50-70 threads the bilayer; that stretch reads VLGVQSLLIILLSGLFIGMVL. The Cytoplasmic portion of the chain corresponds to 71–147; sequence GLQGYVVLID…DPLRRVIAPR (77 aa). Residues 148-168 form a helical membrane-spanning segment; that stretch reads FWAGVISMPVLSILFIAIGIW. Topologically, residues 169–198 are periplasmic; that stretch reads GGSLVGVDWKGVDSGSFWSVMQNSVSWSYD. A helical transmembrane segment spans residues 199–219; that stretch reads ILNGFIKAVFFAVAVTWIALF. At 220–238 the chain is on the cytoplasmic side; it reads NGYDCMPTSEGISQATTRT. The helical transmembrane segment at 239–259 threads the bilayer; that stretch reads VVHASLVVLGLDFILTAIMFG. Over 260 to 261 the chain is Periplasmic; sequence AG.

This sequence belongs to the MlaE permease family. The complex is composed of two ATP-binding proteins (MlaF), two transmembrane proteins (MlaE), two cytoplasmic solute-binding proteins (MlaB) and six periplasmic solute-binding proteins (MlaD).

The protein localises to the cell inner membrane. Its function is as follows. Part of the ABC transporter complex MlaFEDB, which is involved in a phospholipid transport pathway that maintains lipid asymmetry in the outer membrane by retrograde trafficking of phospholipids from the outer membrane to the inner membrane. Probably responsible for the translocation of the substrate across the membrane. This chain is Intermembrane phospholipid transport system permease protein MlaE, found in Haemophilus influenzae (strain ATCC 51907 / DSM 11121 / KW20 / Rd).